Consider the following 741-residue polypeptide: Transcription activator of gluconeogenesis BDBG_05438 (741 aa).

The disordered stretch occupies residues 1–70 (MTASTRNGSP…NAKDPLRPRR (70 aa)). The segment covering 25 to 61 (KSMTTTPANPPETKSQTNGKGSGTAQSSQKPASTSAN) has biased composition (polar residues). The segment at residues 77–105 (CFACQRAHLTCGDERPCQRCIKRGLQDAC) is a DNA-binding region (zn(2)-C6 fungal-type). Disordered regions lie at residues 135-163 (QANT…QSVS), 202-239 (SVFH…SVSG), 285-321 (GAGD…NNQS), 401-421 (TNLM…PGLK), 559-590 (GSSL…PHTG), and 655-741 (FHGK…AKRG). Positions 202–226 (SVFHAQSPSSTQNFDLSSNPQTQNL) are enriched in polar residues. A compositionally biased stretch (low complexity) spans 227-238 (SSAMSQTASSVS). 2 stretches are compositionally biased toward polar residues: residues 291–321 (PSDS…NNQS) and 401–416 (TNLM…SRIS). Residues 560–572 (SSLSSASSVRGSS) are compositionally biased toward low complexity. A compositionally biased stretch (polar residues) spans 573–586 (TFTPRNNNTHNSID). Residues 672-718 (TGTTTSGDVATTTATGTSTSNGANANTNGNNTNPNDPSTAASSSASS) show a composition bias toward low complexity. Residues 723–732 (RSNHLGKRGG) show a composition bias toward basic residues.

Belongs to the ERT1/acuK family.

It localises to the nucleus. Its function is as follows. Transcription factor which regulates nonfermentable carbon utilization. Activator of gluconeogenetic genes. The sequence is that of Transcription activator of gluconeogenesis BDBG_05438 from Blastomyces gilchristii (strain SLH14081) (Blastomyces dermatitidis).